A 389-amino-acid chain; its full sequence is ATP-dependent (S)-NAD(P)H-hydrate dehydratase (389 aa).

The region spanning 53–389 (TLQLVRNIIP…RGGGRLPQAL (337 aa)) is the YjeF C-terminal domain. Tyrosine 85 is modified (phosphotyrosine). (6S)-NADPHX is bound by residues glutamate 153 and 205–211 (NHMEFSR). ATP-binding positions include 245 to 249 (KGERD) and 264 to 273 (GSSRRCGGQG). Residue aspartate 274 participates in (6S)-NADPHX binding. Disordered stretches follow at residues 316-350 (KTRA…PGGC) and 369-389 (RSLH…PQAL).

This sequence belongs to the NnrD/CARKD family. Mg(2+) serves as cofactor.

It localises to the mitochondrion. It catalyses the reaction (6S)-NADHX + ATP = ADP + phosphate + NADH + H(+). It carries out the reaction (6S)-NADPHX + ATP = ADP + phosphate + NADPH + H(+). Functionally, catalyzes the dehydration of the S-form of NAD(P)HX at the expense of ATP, which is converted to ADP. Together with NAD(P)HX epimerase, which catalyzes the epimerization of the S- and R-forms, the enzyme allows the repair of both epimers of NAD(P)HX, a damaged form of NAD(P)H that is a result of enzymatic or heat-dependent hydration. This is ATP-dependent (S)-NAD(P)H-hydrate dehydratase from Macaca mulatta (Rhesus macaque).